The sequence spans 332 residues: Ferredoxin--NADP reductase 1 (332 aa).

Positions 35, 43, 48, 88, 123, 284, and 325 each coordinate FAD.

Belongs to the ferredoxin--NADP reductase type 2 family. As to quaternary structure, homodimer. FAD is required as a cofactor.

The catalysed reaction is 2 reduced [2Fe-2S]-[ferredoxin] + NADP(+) + H(+) = 2 oxidized [2Fe-2S]-[ferredoxin] + NADPH. The sequence is that of Ferredoxin--NADP reductase 1 from Listeria welshimeri serovar 6b (strain ATCC 35897 / DSM 20650 / CCUG 15529 / CIP 8149 / NCTC 11857 / SLCC 5334 / V8).